The chain runs to 456 residues: ATP synthase subunit beta 1 (456 aa).

Residue 152–159 (GGAGVGKS) participates in ATP binding.

Belongs to the ATPase alpha/beta chains family. In terms of assembly, F-type ATPases have 2 components, CF(1) - the catalytic core - and CF(0) - the membrane proton channel. CF(1) has five subunits: alpha(3), beta(3), gamma(1), delta(1), epsilon(1). CF(0) has three main subunits: a(1), b(2) and c(9-12). The alpha and beta chains form an alternating ring which encloses part of the gamma chain. CF(1) is attached to CF(0) by a central stalk formed by the gamma and epsilon chains, while a peripheral stalk is formed by the delta and b chains.

It localises to the cell membrane. The enzyme catalyses ATP + H2O + 4 H(+)(in) = ADP + phosphate + 5 H(+)(out). Its function is as follows. Produces ATP from ADP in the presence of a proton gradient across the membrane. The catalytic sites are hosted primarily by the beta subunits. The polypeptide is ATP synthase subunit beta 1 (Listeria monocytogenes serotype 4b (strain F2365)).